The chain runs to 385 residues: Methionine aminopeptidase 1 (385 aa).

The C6H2-type zinc-finger motif lies at 6–59 (SRVCETEGCSSEAKLQCPTCIKLGIQGSYFCSQECFKGSWATHKLLHKKAKDDK). Cys9, Cys14, Cys22, Cys25, Cys36, Cys40, His48, and His52 together coordinate Zn(2+). An a protein-binding site is contributed by His203. Zn(2+)-binding residues include Asp220, Asp231, and His294. His301 contacts a protein. Residues Glu327 and Glu358 each coordinate Zn(2+).

This sequence belongs to the peptidase M24A family. Methionine aminopeptidase type 1 subfamily. Associates with the 60S ribosomal subunit of the 80S translational complex. Requires Zn(2+) as cofactor. Co(2+) is required as a cofactor. It depends on Mn(2+) as a cofactor. Fe(2+) serves as cofactor.

Its subcellular location is the cytoplasm. The enzyme catalyses Release of N-terminal amino acids, preferentially methionine, from peptides and arylamides.. Cotranslationally removes the N-terminal methionine from nascent proteins. The N-terminal methionine is often cleaved when the second residue in the primary sequence is small and uncharged (Met-Ala-, Cys, Gly, Pro, Ser, Thr, or Val). This is Methionine aminopeptidase 1 (metap1) from Xenopus laevis (African clawed frog).